A 499-amino-acid polypeptide reads, in one-letter code: Aspartyl/glutamyl-tRNA(Asn/Gln) amidotransferase subunit B (499 aa).

It belongs to the GatB/GatE family. GatB subfamily. As to quaternary structure, heterotrimer of A, B and C subunits.

It catalyses the reaction L-glutamyl-tRNA(Gln) + L-glutamine + ATP + H2O = L-glutaminyl-tRNA(Gln) + L-glutamate + ADP + phosphate + H(+). The enzyme catalyses L-aspartyl-tRNA(Asn) + L-glutamine + ATP + H2O = L-asparaginyl-tRNA(Asn) + L-glutamate + ADP + phosphate + 2 H(+). Its function is as follows. Allows the formation of correctly charged Asn-tRNA(Asn) or Gln-tRNA(Gln) through the transamidation of misacylated Asp-tRNA(Asn) or Glu-tRNA(Gln) in organisms which lack either or both of asparaginyl-tRNA or glutaminyl-tRNA synthetases. The reaction takes place in the presence of glutamine and ATP through an activated phospho-Asp-tRNA(Asn) or phospho-Glu-tRNA(Gln). The protein is Aspartyl/glutamyl-tRNA(Asn/Gln) amidotransferase subunit B of Salinispora tropica (strain ATCC BAA-916 / DSM 44818 / JCM 13857 / NBRC 105044 / CNB-440).